We begin with the raw amino-acid sequence, 150 residues long: Large-conductance mechanosensitive channel (150 aa).

Helical transmembrane passes span 19–39 and 85–105; these read VGII…SDVL and GIFL…FMLI.

Belongs to the MscL family. In terms of assembly, homopentamer.

It localises to the cell inner membrane. Its function is as follows. Channel that opens in response to stretch forces in the membrane lipid bilayer. May participate in the regulation of osmotic pressure changes within the cell. This Chlorobium limicola (strain DSM 245 / NBRC 103803 / 6330) protein is Large-conductance mechanosensitive channel.